The primary structure comprises 247 residues: 23S rRNA (guanosine-2'-O-)-methyltransferase RlmB (247 aa).

Residues G197, I217, and L226 each contribute to the S-adenosyl-L-methionine site.

Belongs to the class IV-like SAM-binding methyltransferase superfamily. RNA methyltransferase TrmH family. RlmB subfamily.

The protein localises to the cytoplasm. It carries out the reaction guanosine(2251) in 23S rRNA + S-adenosyl-L-methionine = 2'-O-methylguanosine(2251) in 23S rRNA + S-adenosyl-L-homocysteine + H(+). Functionally, specifically methylates the ribose of guanosine 2251 in 23S rRNA. The sequence is that of 23S rRNA (guanosine-2'-O-)-methyltransferase RlmB from Vibrio parahaemolyticus serotype O3:K6 (strain RIMD 2210633).